Consider the following 554-residue polypeptide: Acetyl-S-ACP:malonate ACP transferase (554 aa).

It localises to the cytoplasm. The enzyme catalyses acetyl-[ACP] + malonate = malonyl-[ACP] + acetate. Functionally, alpha subunit of the biotin-independent and biotin-dependent malonate decarboxylase multienzyme complex (EC 4.1.1.88 and EC 7.2.4.4, respectively). Acts as an acyl-carrier protein (ACP) transferase component. This first step in malonate decarboxylation involves the exchange of an acetyl thioester residue bound to the activated ACP subunit for a malonyl thioester residue. Has a weak activity with acetyl-CoA as substrate. This Malonomonas rubra protein is Acetyl-S-ACP:malonate ACP transferase (madA).